The primary structure comprises 266 residues: Histidinol-phosphatase (266 aa).

Positions 69, 84, 86, and 87 each coordinate Mg(2+). Glu-69 contacts substrate. Substrate is bound by residues 86 to 89 (IDGT), Arg-190, and Asp-218. Asp-218 provides a ligand contact to Mg(2+).

Belongs to the inositol monophosphatase superfamily. Requires Mg(2+) as cofactor.

It catalyses the reaction L-histidinol phosphate + H2O = L-histidinol + phosphate. The protein operates within amino-acid biosynthesis; L-histidine biosynthesis; L-histidine from 5-phospho-alpha-D-ribose 1-diphosphate: step 8/9. In terms of biological role, catalyzes the dephosphorylation of histidinol-phosphate to histidinol, the direct precursor of histidine. The sequence is that of Histidinol-phosphatase from Streptomyces coelicolor (strain ATCC BAA-471 / A3(2) / M145).